A 587-amino-acid polypeptide reads, in one-letter code: Zinc finger protein 496 (587 aa).

The segment at 1 to 40 (MPTALCPRVLAPKESEEPRKMRSPPGENPSPQGELPSPES) is disordered. Basic and acidic residues predominate over residues 11 to 20 (APKESEEPRK). Residue K13 forms a Glycyl lysine isopeptide (Lys-Gly) (interchain with G-Cter in SUMO2) linkage. Residues 42–124 (RRLFRRFRYQ…AAVEALEREP (83 aa)) form the SCAN box domain. S185 carries the post-translational modification Phosphoserine. The 71-residue stretch at 221 to 291 (SPFKDMILCF…ELQDLQGKEV (71 aa)) folds into the KRAB domain. Residues 260 to 282 (PPNDLAAQPDLSQGEENEPRVPE) are disordered. Residue S299 is modified to Phosphoserine. A disordered region spans residues 358-399 (SSSGDEDSQHGPYCTEELGSPTEKQRSLPASHRSSTEAGGEV). Over residues 389–399 (HRSSTEAGGEV) the composition is skewed to polar residues. K403 is covalently cross-linked (Glycyl lysine isopeptide (Lys-Gly) (interchain with G-Cter in SUMO2)). A C2H2-type 1; degenerate zinc finger spans residues 406–428 (YVCPNCGKIFRWRVNFIRHLRSR). 2 consecutive C2H2-type zinc fingers follow at residues 435 to 457 (HECSVCGELFSDSEDLDGHLESH) and 463 to 485 (YRCGACGKSFRLNSHLLSHRRIH). The segment at 488 to 513 (PDRLQPVEKREQAASEDADKGPKEPL) is disordered. A Glycyl lysine isopeptide (Lys-Gly) (interchain with G-Cter in SUMO2) cross-link involves residue K496. C2H2-type zinc fingers lie at residues 522 to 545 (FQCCECGKAFQRHDHLARHRSHFH) and 553 to 575 (FQCRYCVKSFTQNYDLLRHERLH).

It belongs to the krueppel C2H2-type zinc-finger protein family. In terms of assembly, interacts (via zinc-fingers) with JARID2. Interacts with NSD1.

Its subcellular location is the nucleus. In terms of biological role, DNA-binding transcription factor that can both act as an activator and a repressor. This is Zinc finger protein 496 (ZNF496) from Homo sapiens (Human).